Consider the following 175-residue polypeptide: Secretion monitor (175 aa).

A signal peptide spans 1 to 38 (MSIINFWRQFGRRYFWSHLLLGMVAAGIGMPSLVSAHA).

The protein belongs to the SecM family.

The protein resides in the cytoplasm. The protein localises to the cytosol. It is found in the periplasm. In terms of biological role, regulates secA expression by translational coupling of the secM secA operon. Translational pausing at a specific Pro residue 5 residues before the end of the protein may allow disruption of a mRNA repressor helix that normally suppresses secA translation initiation. In Proteus mirabilis (strain HI4320), this protein is Secretion monitor.